The sequence spans 1103 residues: Mediator of RNA polymerase II transcription subunit 14 (1103 aa).

Disordered stretches follow at residues 1-63 (MPGV…GYKQ), 120-140 (VPPQDSGPLPGAPNGKPLGNQ), and 1054-1103 (LETK…ITID). The segment covering 1073-1103 (SGNTVQNARLENKSPQKAAATHSNADVITID) has biased composition (polar residues).

It belongs to the Mediator complex subunit 14 family. In terms of assembly, component of the Mediator complex.

The protein resides in the nucleus. In terms of biological role, component of the Mediator complex, a coactivator involved in the regulated transcription of nearly all RNA polymerase II-dependent genes. Mediator functions as a bridge to convey information from gene-specific regulatory proteins to the basal RNA polymerase II transcription machinery. Mediator is recruited to promoters by direct interactions with regulatory proteins and serves as a scaffold for the assembly of a functional preinitiation complex with RNA polymerase II and the general transcription factors. In Aspergillus terreus (strain NIH 2624 / FGSC A1156), this protein is Mediator of RNA polymerase II transcription subunit 14 (rgr1).